Reading from the N-terminus, the 617-residue chain is tRNA 5-methylaminomethyl-2-thiouridine biosynthesis bifunctional protein MnmC (617 aa).

The segment at Met-1–Pro-226 is tRNA (mnm(5)s(2)U34)-methyltransferase. Positions Ile-241–Gly-617 are FAD-dependent cmnm(5)s(2)U34 oxidoreductase.

The protein in the N-terminal section; belongs to the methyltransferase superfamily. tRNA (mnm(5)s(2)U34)-methyltransferase family. This sequence in the C-terminal section; belongs to the DAO family. FAD is required as a cofactor.

The protein localises to the cytoplasm. It carries out the reaction 5-aminomethyl-2-thiouridine(34) in tRNA + S-adenosyl-L-methionine = 5-methylaminomethyl-2-thiouridine(34) in tRNA + S-adenosyl-L-homocysteine + H(+). Catalyzes the last two steps in the biosynthesis of 5-methylaminomethyl-2-thiouridine (mnm(5)s(2)U) at the wobble position (U34) in tRNA. Catalyzes the FAD-dependent demodification of cmnm(5)s(2)U34 to nm(5)s(2)U34, followed by the transfer of a methyl group from S-adenosyl-L-methionine to nm(5)s(2)U34, to form mnm(5)s(2)U34. This chain is tRNA 5-methylaminomethyl-2-thiouridine biosynthesis bifunctional protein MnmC, found in Nitrosospira multiformis (strain ATCC 25196 / NCIMB 11849 / C 71).